Reading from the N-terminus, the 384-residue chain is MAFSERTRAARPLSDTTLAYFPDARFAPSDRDRAARVRCTYQCSHTRSWRAVAVSDNDSRYGHIPVMLDRCYELLAPALTADSTDGSGAVLVDATLGAGGHTEHFLTMLPGLTVIGLDRDTNALDIARSRLAPFGTRFVGVHTRYDGLADALDGLGYRTTSSVDGVLFDLGVSSMQLDQAERGFAYSVDAPLDMRMNAQDELTAADILNTYSAVELSRVLSRFGEERFARRIADEIVRRRANEPFTRSGQLVELLYATIPAATRRTGGHPAKRTFQALRIAVNAELESLATAIPAAMAALRPGGRVAVMAYQSLEDKIVKAEFAAATASRSPIDLPVELPGDAPEFTAITRGAERANDEEIEVNPRSAPVRLRAVERVADRRNA.

S-adenosyl-L-methionine contacts are provided by residues 99 to 101 (GGH), Asp-118, Tyr-145, Asp-169, and Gln-176.

The protein belongs to the methyltransferase superfamily. RsmH family.

The protein resides in the cytoplasm. It carries out the reaction cytidine(1402) in 16S rRNA + S-adenosyl-L-methionine = N(4)-methylcytidine(1402) in 16S rRNA + S-adenosyl-L-homocysteine + H(+). Specifically methylates the N4 position of cytidine in position 1402 (C1402) of 16S rRNA. This Mycobacteroides abscessus (strain ATCC 19977 / DSM 44196 / CCUG 20993 / CIP 104536 / JCM 13569 / NCTC 13031 / TMC 1543 / L948) (Mycobacterium abscessus) protein is Ribosomal RNA small subunit methyltransferase H.